Here is a 334-residue protein sequence, read N- to C-terminus: Inositol 2-dehydrogenase (334 aa).

Belongs to the Gfo/Idh/MocA family. As to quaternary structure, homotetramer.

It carries out the reaction myo-inositol + NAD(+) = scyllo-inosose + NADH + H(+). Its function is as follows. Involved in the oxidation of myo-inositol (MI) to 2-keto-myo-inositol (2KMI or 2-inosose). The sequence is that of Inositol 2-dehydrogenase from Cereibacter sphaeroides (strain ATCC 17029 / ATH 2.4.9) (Rhodobacter sphaeroides).